We begin with the raw amino-acid sequence, 307 residues long: 4-hydroxythreonine-4-phosphate dehydrogenase (307 aa).

Substrate contacts are provided by H126 and T127. Residues H156, H195, and H251 each coordinate a divalent metal cation. Substrate-binding residues include K259, N268, and R277.

The protein belongs to the PdxA family. Homodimer. Zn(2+) serves as cofactor. Requires Mg(2+) as cofactor. It depends on Co(2+) as a cofactor.

The protein resides in the cytoplasm. The enzyme catalyses 4-(phosphooxy)-L-threonine + NAD(+) = 3-amino-2-oxopropyl phosphate + CO2 + NADH. Its pathway is cofactor biosynthesis; pyridoxine 5'-phosphate biosynthesis; pyridoxine 5'-phosphate from D-erythrose 4-phosphate: step 4/5. Catalyzes the NAD(P)-dependent oxidation of 4-(phosphooxy)-L-threonine (HTP) into 2-amino-3-oxo-4-(phosphooxy)butyric acid which spontaneously decarboxylates to form 3-amino-2-oxopropyl phosphate (AHAP). The polypeptide is 4-hydroxythreonine-4-phosphate dehydrogenase (Helicobacter pylori (strain HPAG1)).